Consider the following 415-residue polypeptide: N-succinylarginine dihydrolase (415 aa).

Residues 18–27, Asn-100, and 127–128 each bind substrate; these read AGLSRGNIAS and HR. The active site involves Glu-161. Arg-193 is a substrate binding site. His-229 is an active-site residue. Residues Asp-231 and Asn-340 each contribute to the substrate site. The active-site Nucleophile is Cys-346.

The protein belongs to the succinylarginine dihydrolase family. Homodimer.

It carries out the reaction N(2)-succinyl-L-arginine + 2 H2O + 2 H(+) = N(2)-succinyl-L-ornithine + 2 NH4(+) + CO2. It participates in amino-acid degradation; L-arginine degradation via AST pathway; L-glutamate and succinate from L-arginine: step 2/5. In terms of biological role, catalyzes the hydrolysis of N(2)-succinylarginine into N(2)-succinylornithine, ammonia and CO(2). The polypeptide is N-succinylarginine dihydrolase (Sphingopyxis alaskensis (strain DSM 13593 / LMG 18877 / RB2256) (Sphingomonas alaskensis)).